A 115-amino-acid polypeptide reads, in one-letter code: NAD(P)H-quinone oxidoreductase subunit M (115 aa).

The protein belongs to the complex I NdhM subunit family. In terms of assembly, NDH-1 can be composed of about 15 different subunits; different subcomplexes with different compositions have been identified which probably have different functions.

The protein resides in the cellular thylakoid membrane. The catalysed reaction is a plastoquinone + NADH + (n+1) H(+)(in) = a plastoquinol + NAD(+) + n H(+)(out). It carries out the reaction a plastoquinone + NADPH + (n+1) H(+)(in) = a plastoquinol + NADP(+) + n H(+)(out). Its function is as follows. NDH-1 shuttles electrons from an unknown electron donor, via FMN and iron-sulfur (Fe-S) centers, to quinones in the respiratory and/or the photosynthetic chain. The immediate electron acceptor for the enzyme in this species is believed to be plastoquinone. Couples the redox reaction to proton translocation, and thus conserves the redox energy in a proton gradient. Cyanobacterial NDH-1 also plays a role in inorganic carbon-concentration. The sequence is that of NAD(P)H-quinone oxidoreductase subunit M from Prochlorococcus marinus (strain MIT 9312).